Reading from the N-terminus, the 250-residue chain is NAD-dependent protein deacetylase 2 (250 aa).

Residues 4–250 (MDSKNLFKKA…LRNIWNLIKS (247 aa)) form the Deacetylase sirtuin-type domain. NAD(+) is bound by residues Ala29, Thr33, Phe40, Arg41, Gln107, Ile109, Asp110, and His125. Residue Phe40 participates in nicotinamide binding. Ile109 and Asp110 together coordinate nicotinamide. Residue His125 is the Proton acceptor of the active site. Cys133, Cys136, Cys158, and Cys161 together coordinate Zn(2+). NAD(+) is bound by residues Ser198, Ser199, and Asn219.

It belongs to the sirtuin family. Class U subfamily. It depends on Zn(2+) as a cofactor.

It is found in the cytoplasm. It catalyses the reaction N(6)-acetyl-L-lysyl-[protein] + NAD(+) + H2O = 2''-O-acetyl-ADP-D-ribose + nicotinamide + L-lysyl-[protein]. Functionally, NAD-dependent protein deacetylase which modulates the activities of several enzymes which are inactive in their acetylated form. The polypeptide is NAD-dependent protein deacetylase 2 (Caldanaerobacter subterraneus subsp. tengcongensis (strain DSM 15242 / JCM 11007 / NBRC 100824 / MB4) (Thermoanaerobacter tengcongensis)).